The following is a 321-amino-acid chain: Porphobilinogen deaminase (321 aa).

At Cys246 the chain carries S-(dipyrrolylmethanemethyl)cysteine.

It belongs to the HMBS family. Monomer. It depends on dipyrromethane as a cofactor.

It catalyses the reaction 4 porphobilinogen + H2O = hydroxymethylbilane + 4 NH4(+). It functions in the pathway porphyrin-containing compound metabolism; protoporphyrin-IX biosynthesis; coproporphyrinogen-III from 5-aminolevulinate: step 2/4. Tetrapolymerization of the monopyrrole PBG into the hydroxymethylbilane pre-uroporphyrinogen in several discrete steps. In Helicobacter hepaticus (strain ATCC 51449 / 3B1), this protein is Porphobilinogen deaminase.